An 831-amino-acid chain; its full sequence is Cation/H(+) symporter 13 (831 aa).

Helical transmembrane passes span Tyr-50–Phe-70, Val-89–Ala-109, Lys-112–Leu-132, Ile-147–Phe-167, Leu-214–Asn-234, Met-250–Thr-270, Val-282–Met-302, Gly-303–Leu-323, Phe-334–Phe-354, Val-364–Ala-384, Leu-397–Trp-417, and Leu-430–Tyr-450.

It belongs to the monovalent cation:proton antiporter 2 (CPA2) transporter (TC 2.A.37) family. CHX (TC 2.A.37.4) subfamily. Preferentially expressed in pollen before and after germination. Detected in pollen grains within anthers of the flower buds or in pollen on fully open flowers and on the stigma, and in pollen tubes growing in the style. Weakly expressed in roots.

The protein resides in the cell membrane. Functionally, high-affinity potassium transporter that plays a role in K(+) acquisition. May operate as a K(+)/H(+) symporter. The sequence is that of Cation/H(+) symporter 13 (CHX13) from Arabidopsis thaliana (Mouse-ear cress).